We begin with the raw amino-acid sequence, 429 residues long: 4-hydroxy-3-methylbut-2-en-1-yl diphosphate synthase (flavodoxin) (429 aa).

[4Fe-4S] cluster-binding residues include cysteine 323, cysteine 326, cysteine 369, and glutamate 376.

The protein belongs to the IspG family. Requires [4Fe-4S] cluster as cofactor.

It catalyses the reaction (2E)-4-hydroxy-3-methylbut-2-enyl diphosphate + oxidized [flavodoxin] + H2O + 2 H(+) = 2-C-methyl-D-erythritol 2,4-cyclic diphosphate + reduced [flavodoxin]. Its pathway is isoprenoid biosynthesis; isopentenyl diphosphate biosynthesis via DXP pathway; isopentenyl diphosphate from 1-deoxy-D-xylulose 5-phosphate: step 5/6. In terms of biological role, converts 2C-methyl-D-erythritol 2,4-cyclodiphosphate (ME-2,4cPP) into 1-hydroxy-2-methyl-2-(E)-butenyl 4-diphosphate. The polypeptide is 4-hydroxy-3-methylbut-2-en-1-yl diphosphate synthase (flavodoxin) (Wolbachia sp. subsp. Brugia malayi (strain TRS)).